The primary structure comprises 525 residues: Glutamyl-tRNA(Gln) amidotransferase subunit A, mitochondrial (525 aa).

Catalysis depends on charge relay system residues Lys76 and Ser168. The Acyl-ester intermediate role is filled by Ser192.

The protein belongs to the amidase family. GatA subfamily. Subunit of the heterotrimeric GatCAB amidotransferase (AdT) complex, composed of A (QRSL1), B (GATB) and C (GATC) subunits.

The protein resides in the mitochondrion. It carries out the reaction L-glutamyl-tRNA(Gln) + L-glutamine + ATP + H2O = L-glutaminyl-tRNA(Gln) + L-glutamate + ADP + phosphate + H(+). In terms of biological role, allows the formation of correctly charged Gln-tRNA(Gln) through the transamidation of misacylated Glu-tRNA(Gln) in the mitochondria. The reaction takes place in the presence of glutamine and ATP through an activated gamma-phospho-Glu-tRNA(Gln). In Rattus norvegicus (Rat), this protein is Glutamyl-tRNA(Gln) amidotransferase subunit A, mitochondrial (Qrsl1).